Reading from the N-terminus, the 624-residue chain is Chaperone protein HtpG (624 aa).

The tract at residues 1-338 is a; substrate-binding; the sequence is MNNKNKITHT…SQDLPLNISR (338 aa). The tract at residues 339–552 is b; it reads EILQDSSITH…TNDMSTQMAK (214 aa). The interval 553–624 is c; that stretch reads IFSAAGQPIP…IQRINNFFIS (72 aa).

The protein belongs to the heat shock protein 90 family. In terms of assembly, homodimer.

The protein resides in the cytoplasm. Functionally, molecular chaperone. Has ATPase activity. This Buchnera aphidicola subsp. Cinara cedri (strain Cc) protein is Chaperone protein HtpG.